Reading from the N-terminus, the 222-residue chain is Guanylate kinase (222 aa).

One can recognise a Guanylate kinase-like domain in the interval 19–197 (GFLFILSSPS…SVSLIKSIYL (179 aa)). Residue 26 to 33 (SPSGAGKS) participates in ATP binding.

Belongs to the guanylate kinase family.

The protein resides in the cytoplasm. The enzyme catalyses GMP + ATP = GDP + ADP. Functionally, essential for recycling GMP and indirectly, cGMP. This chain is Guanylate kinase, found in Bartonella henselae (strain ATCC 49882 / DSM 28221 / CCUG 30454 / Houston 1) (Rochalimaea henselae).